A 136-amino-acid chain; its full sequence is Peptide methionine sulfoxide reductase MsrB (136 aa).

The MsrB domain maps to 6 to 128; it reads EVSLYKELTD…NSAALSFTDE (123 aa). Positions 45, 48, 94, and 97 each coordinate Zn(2+). C117 functions as the Nucleophile in the catalytic mechanism.

It belongs to the MsrB Met sulfoxide reductase family. Requires Zn(2+) as cofactor.

It carries out the reaction L-methionyl-[protein] + [thioredoxin]-disulfide + H2O = L-methionyl-(R)-S-oxide-[protein] + [thioredoxin]-dithiol. The sequence is that of Peptide methionine sulfoxide reductase MsrB from Photorhabdus laumondii subsp. laumondii (strain DSM 15139 / CIP 105565 / TT01) (Photorhabdus luminescens subsp. laumondii).